The following is a 508-amino-acid chain: UDP-N-acetylmuramoyl-L-alanyl-D-glutamate--2,6-diaminopimelate ligase (508 aa).

Position 33 (Ser33) interacts with UDP-N-acetyl-alpha-D-muramoyl-L-alanyl-D-glutamate. An ATP-binding site is contributed by 121 to 127 (GTNGKST). UDP-N-acetyl-alpha-D-muramoyl-L-alanyl-D-glutamate is bound by residues Asn162, 163-164 (TT), Ser190, Gln196, and Arg198. Lys230 carries the post-translational modification N6-carboxylysine. Residues Arg399, 423–426 (DNPR), Gly474, and Glu478 contribute to the meso-2,6-diaminopimelate site. The Meso-diaminopimelate recognition motif motif lies at 423–426 (DNPR).

It belongs to the MurCDEF family. MurE subfamily. Requires Mg(2+) as cofactor. In terms of processing, carboxylation is probably crucial for Mg(2+) binding and, consequently, for the gamma-phosphate positioning of ATP.

The protein localises to the cytoplasm. It catalyses the reaction UDP-N-acetyl-alpha-D-muramoyl-L-alanyl-D-glutamate + meso-2,6-diaminopimelate + ATP = UDP-N-acetyl-alpha-D-muramoyl-L-alanyl-gamma-D-glutamyl-meso-2,6-diaminopimelate + ADP + phosphate + H(+). It participates in cell wall biogenesis; peptidoglycan biosynthesis. Catalyzes the addition of meso-diaminopimelic acid to the nucleotide precursor UDP-N-acetylmuramoyl-L-alanyl-D-glutamate (UMAG) in the biosynthesis of bacterial cell-wall peptidoglycan. In Buchnera aphidicola subsp. Baizongia pistaciae (strain Bp), this protein is UDP-N-acetylmuramoyl-L-alanyl-D-glutamate--2,6-diaminopimelate ligase.